A 60-amino-acid chain; its full sequence is UPF0434 protein KPK_3615 (60 aa).

This sequence belongs to the UPF0434 family.

In Klebsiella pneumoniae (strain 342), this protein is UPF0434 protein KPK_3615.